Here is a 600-residue protein sequence, read N- to C-terminus: Aspartate--tRNA ligase (600 aa).

Glu175 serves as a coordination point for L-aspartate. Residues 199-202 (QLFK) are aspartate. Arg221 is a binding site for L-aspartate. Residues 221–223 (RDE) and Gln230 contribute to the ATP site. His448 serves as a coordination point for L-aspartate. ATP is bound at residue Glu484. Arg491 lines the L-aspartate pocket. ATP is bound at residue 536-539 (GLDR).

The protein belongs to the class-II aminoacyl-tRNA synthetase family. Type 1 subfamily. In terms of assembly, homodimer.

The protein localises to the cytoplasm. It carries out the reaction tRNA(Asp) + L-aspartate + ATP = L-aspartyl-tRNA(Asp) + AMP + diphosphate. Functionally, catalyzes the attachment of L-aspartate to tRNA(Asp) in a two-step reaction: L-aspartate is first activated by ATP to form Asp-AMP and then transferred to the acceptor end of tRNA(Asp). This chain is Aspartate--tRNA ligase, found in Limosilactobacillus reuteri (strain DSM 20016) (Lactobacillus reuteri).